The primary structure comprises 206 residues: Geminin (206 aa).

Residues 1–18 (MNLSMKQKQEGAQENVKN) show a composition bias toward polar residues. Residues 1-42 (MNLSMKQKQEGAQENVKNSPVPRRTLKMIQPSADGSLVGREN) form a disordered region. K27 bears the N6-acetyllysine mark. Phosphoserine is present on residues S36, S63, and S64. The tract at residues 79–158 (TQEAFDLISK…AEVIERLSNE (80 aa)) is necessary and sufficient for interaction with IDAS and CDT1. The stretch at 91-141 (PSSQYWKEVAEQRRKALYEALKENEKLHKEIEQKDSEIARLRKENKDLAEV) forms a coiled coil. Residues 157–206 (NEPLDNFESPDSQEFDSEEEAVEYSELEDSGAGTCAEETVSSSTDARPCT) form a disordered region. Acidic residues predominate over residues 167-185 (DSQEFDSEEEAVEYSELED). The homeodomain binding stretch occupies residues 167–187 (DSQEFDSEEEAVEYSELEDSG). A Phosphoserine; by CK2 modification is found at S181. Residues 195 to 206 (TVSSSTDARPCT) are compositionally biased toward polar residues.

Belongs to the geminin family. In terms of assembly, homotetramer. Interacts with CDT1; this inhibits binding of the MCM complex to origins of replication. The complex with CDT1 exists in two forms, a 'permissive' heterotrimer and an 'inhibitory' heterohexamer. Interacts (via coiled-coil domain) with IDAS (via coiled-coil domain); this targets GMNN to the nucleus. The heterodimer formed by GMNN and MCIDAS has much lower affinity for CDT1 than the GMNN homodimer. Interacts with a subset of Hox proteins, affinity increasing from anterior to posterior types, the strongest interaction being with HOXB1, HOXC9 and HOXD10. Interacts with LRWD1 from G1/S to mitosis. In terms of processing, phosphorylated during mitosis. Phosphorylation at Ser-181 by CK2 results in enhanced binding to Hox proteins and more potent inhibitory effect on Hox transcriptional activity.

It is found in the cytoplasm. The protein resides in the nucleus. In terms of biological role, inhibits DNA replication by preventing the incorporation of MCM complex into pre-replication complex (pre-RC). It is degraded during the mitotic phase of the cell cycle. Its destruction at the metaphase-anaphase transition permits replication in the succeeding cell cycle. Inhibits histone acetyltransferase activity of KAT7/HBO1 in a CDT1-dependent manner, inhibiting histone H4 acetylation and DNA replication licensing. Inhibits the transcriptional activity of a subset of Hox proteins, enrolling them in cell proliferative control. In Mus musculus (Mouse), this protein is Geminin (Gmnn).